Here is a 486-residue protein sequence, read N- to C-terminus: Cardiolipin synthase A (486 aa).

2 helical membrane-spanning segments follow: residues 3–23 and 38–58; these read TVYT…IAGV and MAWL…YLAV. PLD phosphodiesterase domains follow at residues 219–246 and 399–426; these read MDLR…VDPR and EGGL…DMRS. Catalysis depends on residues His224, Lys226, Asp231, His404, Lys406, and Asp411.

The protein belongs to the phospholipase D family. Cardiolipin synthase subfamily. ClsA sub-subfamily.

The protein localises to the cell inner membrane. The enzyme catalyses 2 a 1,2-diacyl-sn-glycero-3-phospho-(1'-sn-glycerol) = a cardiolipin + glycerol. Functionally, catalyzes the reversible phosphatidyl group transfer from one phosphatidylglycerol molecule to another to form cardiolipin (CL) (diphosphatidylglycerol) and glycerol. This is Cardiolipin synthase A from Escherichia coli O7:K1 (strain IAI39 / ExPEC).